The primary structure comprises 311 residues: Tyrosine recombinase XerD (311 aa).

Residues 1–83 (MEFIAQFLEM…TIKSYYAFLI (83 aa)) enclose the Core-binding (CB) domain. In terms of domain architecture, Tyr recombinase spans 104-299 (KLPIILSIDQ…HTNHLKKALL (196 aa)). Active-site residues include Arg-145, Lys-176, His-251, Arg-254, and His-277. Tyr-286 (O-(3'-phospho-DNA)-tyrosine intermediate) is an active-site residue.

The protein belongs to the 'phage' integrase family. XerD subfamily. In terms of assembly, forms a cyclic heterotetrameric complex composed of two molecules of XerC and two molecules of XerD.

It is found in the cytoplasm. Functionally, site-specific tyrosine recombinase, which acts by catalyzing the cutting and rejoining of the recombining DNA molecules. The XerC-XerD complex is essential to convert dimers of the bacterial chromosome into monomers to permit their segregation at cell division. It also contributes to the segregational stability of plasmids. This Rickettsia prowazekii (strain Madrid E) protein is Tyrosine recombinase XerD.